The sequence spans 318 residues: MGRKIVVALGGNAILSKDASAAAQQQALMDTAKHLVKFIENGDQLIISHGNGPQVGNLLLQQSAGSTEENPAMPLDTAVAMTQGSIGYWMQNAMNQVLKEKGLNKTVATVVTQVEVSADDPAFTNPTKPIGPFMSKDEADLAKKENPDFTFVEDAGRGYRRVVPSPKPIGVVETDAVNTLVDAGIVPISVGGGGIPVVADGNQLLGREAVIDKDFASEKLAELVGADALIILTAVPNIYVNFNKPNQKKLEHVSVNDLETYISEKQFAPGSMLPKVQAAIDFVKATGNEAVVTALDNIEGFVNEGSGTVITKKVRQQA.

Belongs to the carbamate kinase family.

Its subcellular location is the cytoplasm. The catalysed reaction is hydrogencarbonate + NH4(+) + ATP = carbamoyl phosphate + ADP + H2O + H(+). It functions in the pathway metabolic intermediate metabolism; carbamoyl phosphate degradation; CO(2) and NH(3) from carbamoyl phosphate: step 1/1. This Lentilactobacillus hilgardii (Lactobacillus hilgardii) protein is Carbamate kinase (arcC).